Consider the following 254-residue polypeptide: Triosephosphate isomerase (254 aa).

9–11 provides a ligand contact to substrate; the sequence is NWK. Catalysis depends on His95, which acts as the Electrophile. Glu167 acts as the Proton acceptor in catalysis. Substrate-binding positions include Gly173, Ser213, and 234–235; that span reads GG.

This sequence belongs to the triosephosphate isomerase family. As to quaternary structure, homodimer.

The protein resides in the cytoplasm. It carries out the reaction D-glyceraldehyde 3-phosphate = dihydroxyacetone phosphate. The protein operates within carbohydrate biosynthesis; gluconeogenesis. It functions in the pathway carbohydrate degradation; glycolysis; D-glyceraldehyde 3-phosphate from glycerone phosphate: step 1/1. Involved in the gluconeogenesis. Catalyzes stereospecifically the conversion of dihydroxyacetone phosphate (DHAP) to D-glyceraldehyde-3-phosphate (G3P). The sequence is that of Triosephosphate isomerase from Roseiflexus sp. (strain RS-1).